Consider the following 106-residue polypeptide: UPF0060 membrane protein RHE_CH01408 (106 aa).

A run of 4 helical transmembrane segments spans residues 4 to 24 (IIYA…WAWL), 30 to 50 (AWWL…LTLV), 59 to 79 (FAAY…LIEG), and 86 to 106 (DIGG…APRA).

Belongs to the UPF0060 family.

The protein localises to the cell inner membrane. The chain is UPF0060 membrane protein RHE_CH01408 from Rhizobium etli (strain ATCC 51251 / DSM 11541 / JCM 21823 / NBRC 15573 / CFN 42).